The chain runs to 69 residues: uncharacterized protein (69 aa).

4Fe-4S ferredoxin-type domains are found at residues 2 to 30 and 38 to 67; these read KIEI…KSKK and PPIP…IELS. [4Fe-4S] cluster-binding residues include Cys-10, Cys-13, Cys-16, Cys-20, Cys-47, Cys-50, Cys-53, and Cys-57.

It depends on [4Fe-4S] cluster as a cofactor.

This is an uncharacterized protein from Methanocaldococcus jannaschii (strain ATCC 43067 / DSM 2661 / JAL-1 / JCM 10045 / NBRC 100440) (Methanococcus jannaschii).